The sequence spans 1012 residues: Formate dehydrogenase subunit alpha (1012 aa).

The segment at residues 1–35 (MLIKRRAFLKLTAAGATLSAFGGLGVDLAPAKAQA) is a signal peptide (tat-type signal). A 4Fe-4S Mo/W bis-MGD-type domain is found at 45–103 (AKQTTSVCCYCSVGCGLIVHTDKKTNRAINVEGDPDHPINEGSLCAKGASTWQLAENER). [4Fe-4S] cluster contacts are provided by cysteine 52, cysteine 55, cysteine 59, and cysteine 89. Selenocysteine 193 lines the W-bis(molybdopterin guanine dinucleotide) pocket. Residue selenocysteine 193 is a non-standard amino acid, selenocysteine. Ca(2+) contacts are provided by threonine 393, lysine 395, lysine 398, leucine 428, and asparagine 430. A disulfide bridge links cysteine 852 with cysteine 879.

This sequence belongs to the prokaryotic molybdopterin-containing oxidoreductase family. As to quaternary structure, heterodimer of alpha (FdhA) and beta (FdhB) subunits. Requires [4Fe-4S] cluster as cofactor. W-bis(molybdopterin guanine dinucleotide) is required as a cofactor. The disulfide bond is likely to be broken in the active form of this enzyme. Post-translationally, predicted to be exported by the Tat system. The position of the signal peptide cleavage has been experimentally proven.

The protein resides in the periplasm. It carries out the reaction formate + NAD(+) = CO2 + NADH. Functionally, alpha chain of the formate dehydrogenase (FDH) catalyze the reversible two-electron oxidation of formate to carbon dioxide. FDH loses activity in the presence of air, but this activity can be restored. The alpha subunit of formate dehydrogenase forms the active site. The sequence is that of Formate dehydrogenase subunit alpha from Megalodesulfovibrio gigas (Desulfovibrio gigas).